We begin with the raw amino-acid sequence, 299 residues long: 4-hydroxy-tetrahydrodipicolinate synthase (299 aa).

Residue Thr45 coordinates pyruvate. Tyr133 (proton donor/acceptor) is an active-site residue. Lys161 acts as the Schiff-base intermediate with substrate in catalysis. Ile203 is a binding site for pyruvate.

This sequence belongs to the DapA family. As to quaternary structure, homotetramer; dimer of dimers.

It is found in the cytoplasm. The enzyme catalyses L-aspartate 4-semialdehyde + pyruvate = (2S,4S)-4-hydroxy-2,3,4,5-tetrahydrodipicolinate + H2O + H(+). The protein operates within amino-acid biosynthesis; L-lysine biosynthesis via DAP pathway; (S)-tetrahydrodipicolinate from L-aspartate: step 3/4. Functionally, catalyzes the condensation of (S)-aspartate-beta-semialdehyde [(S)-ASA] and pyruvate to 4-hydroxy-tetrahydrodipicolinate (HTPA). The sequence is that of 4-hydroxy-tetrahydrodipicolinate synthase from Blochmanniella pennsylvanica (strain BPEN).